The following is a 229-amino-acid chain: Glutathione S-transferase 3 (229 aa).

The residue at position 2 (A2) is a Blocked amino end (Ala). The region spanning 3–83 is the GST N-terminal domain; the sequence is AKPVLYYFNG…YIAGKYNLYG (81 aa). Residues Y9, 54-55, and 67-68 contribute to the glutathione site; these read QV and QT. One can recognise a GST C-terminal domain in the interval 85 to 207; sequence DLKERALIDM…LAPGSKRKPI (123 aa).

Belongs to the GST superfamily. Alpha family. As to quaternary structure, homodimer or heterodimer (with a subunit from group CL-4).

The protein resides in the cytoplasm. It carries out the reaction RX + glutathione = an S-substituted glutathione + a halide anion + H(+). Its function is as follows. Catalyzes the conjugation of GSH to a wide variety of electrophilic alkylating agents. Also involved in the metabolism of lipid hydroperoxides, prostaglandins and leukotriene A4 and in binding of non-substrate hydrophobic ligands such as bile acids, a number of drugs and thyroid hormones. This GST does not exhibit peroxidase activity. The chain is Glutathione S-transferase 3 from Gallus gallus (Chicken).